The primary structure comprises 283 residues: 3-methyl-2-oxobutanoate hydroxymethyltransferase (283 aa).

Residues Asp44 and Asp83 each coordinate Mg(2+). Residues 44 to 45 (DS), Asp83, and Lys112 each bind 3-methyl-2-oxobutanoate. Position 114 (Glu114) interacts with Mg(2+). The active-site Proton acceptor is the Glu181.

This sequence belongs to the PanB family. Homodecamer; pentamer of dimers. Mg(2+) is required as a cofactor.

Its subcellular location is the cytoplasm. It carries out the reaction 3-methyl-2-oxobutanoate + (6R)-5,10-methylene-5,6,7,8-tetrahydrofolate + H2O = 2-dehydropantoate + (6S)-5,6,7,8-tetrahydrofolate. Its pathway is cofactor biosynthesis; coenzyme A biosynthesis. In terms of biological role, catalyzes the reversible reaction in which hydroxymethyl group from 5,10-methylenetetrahydrofolate is transferred onto alpha-ketoisovalerate to form ketopantoate. The polypeptide is 3-methyl-2-oxobutanoate hydroxymethyltransferase (Pyrococcus furiosus (strain ATCC 43587 / DSM 3638 / JCM 8422 / Vc1)).